Consider the following 345-residue polypeptide: NADPH dehydrogenase (345 aa).

23 to 26 (SPMC) provides a ligand contact to FMN. Position 28 (Tyr28) interacts with substrate. FMN-binding residues include Ala60 and Gln102. Residue 164 to 167 (HGAH) coordinates substrate. FMN-binding positions include Arg215 and 307–308 (GR).

The protein belongs to the NADH:flavin oxidoreductase/NADH oxidase family. NamA subfamily. Homotetramer. FMN serves as cofactor.

The catalysed reaction is A + NADPH + H(+) = AH2 + NADP(+). Catalyzes the reduction of the double bond of an array of alpha,beta-unsaturated aldehydes and ketones. It also reduces the nitro group of nitroester and nitroaromatic compounds. It could have a role in detoxification processes. The polypeptide is NADPH dehydrogenase (Bacillus thuringiensis (strain Al Hakam)).